Consider the following 171-residue polypeptide: MQDEAVTENTASTGPQAGPPLVVNVQYVKDLSFEVPGAPQIFAALRTQPQVDLNLDVQVRRLEEQAHIYEVVLAIRAEAVERVEGEEKANTVFIAELSYGGVFTLNGIPDESIEPVLLVECPRLLFPFARTILATVTREGGFPPVQLQPIDFVALWQARRAQQQQETVGNA.

The protein belongs to the SecB family. As to quaternary structure, homotetramer, a dimer of dimers. One homotetramer interacts with 1 SecA dimer.

Its subcellular location is the cytoplasm. Functionally, one of the proteins required for the normal export of preproteins out of the cell cytoplasm. It is a molecular chaperone that binds to a subset of precursor proteins, maintaining them in a translocation-competent state. It also specifically binds to its receptor SecA. This is Protein-export protein SecB from Granulibacter bethesdensis (strain ATCC BAA-1260 / CGDNIH1).